The sequence spans 325 residues: Leucine-rich repeat protein FLOR 1 (325 aa).

LRR repeat units lie at residues 65–88, 89–114, 115–140, 142–162, 163–185, 187–211, 213–233, 234–256, 257–280, and 281–305; these read NRRVTGLSVTSGEVSGQISYQIGD, LVDLRTLDFSYLPHLTGNIPRTITKL, KNLNTLYLKHTSLSGPIPDYISELKS, TFLDLSFNQFTGPIPGSLSQM, PKLEAIQINDNKLTGSIPNSFGS, VGNVPNLYLSNNKLSGKIPESLSKY, FNAVDLSGNGFEGDAFMFFGR, NKTTVRVDLSRNMFNFDLVKVKF, ARSIVSLDLSQNHIYGKIPPALTK, and LHLEHFNVSDNHLCGKIPSGGLLQT.

The protein belongs to the polygalacturonase-inhibiting protein family. As to quaternary structure, interacts with MADS domain transcription factors during flower development. Component of a complex made of FLOR1, VSP1 and AGAMOUS (AG). Binds directly with AG. As to expression, confined to flowers and inflorescences (e.g. inflorescence meristems, floral meristems, stamens and carpels).

The protein resides in the cytoplasm. It is found in the nucleus. Its subcellular location is the perinuclear region. It localises to the cell membrane. Its function is as follows. Promotes flowering transition in long days (LD). The polypeptide is Leucine-rich repeat protein FLOR 1 (Arabidopsis thaliana (Mouse-ear cress)).